The primary structure comprises 246 residues: Dihydroorotate dehydrogenase B (NAD(+)), electron transfer subunit (246 aa).

Residues Met-3–Ile-95 enclose the FAD-binding FR-type domain. FAD contacts are provided by residues Arg-48 to Ser-51 and Gly-70 to Thr-71. [2Fe-2S] cluster is bound by residues Cys-213, Cys-218, Cys-221, and Cys-233.

This sequence belongs to the PyrK family. Heterotetramer of 2 PyrK and 2 PyrD type B subunits. [2Fe-2S] cluster is required as a cofactor. FAD serves as cofactor.

The protein operates within pyrimidine metabolism; UMP biosynthesis via de novo pathway; orotate from (S)-dihydroorotate (NAD(+) route): step 1/1. Its function is as follows. Responsible for channeling the electrons from the oxidation of dihydroorotate from the FMN redox center in the PyrD type B subunit to the ultimate electron acceptor NAD(+). The protein is Dihydroorotate dehydrogenase B (NAD(+)), electron transfer subunit of Clostridium perfringens (strain 13 / Type A).